The primary structure comprises 529 residues: Beta-galactoside alpha-2,6-sialyltransferase 2 (529 aa).

The Cytoplasmic segment spans residues methionine 1–arginine 11. A helical; Signal-anchor for type II membrane protein transmembrane segment spans residues methionine 12 to aspartate 32. Residues serine 33–serine 529 lie on the Lumenal side of the membrane. O-linked (GalNAc...) serine glycosylation occurs at serine 69. The N-linked (GlcNAc...) asparagine glycan is linked to asparagine 211. 3 disulfide bridges follow: cysteine 253–cysteine 519, cysteine 296–cysteine 448, and cysteine 466–cysteine 477.

The protein belongs to the glycosyltransferase 29 family. O-glycosylated. In terms of tissue distribution, weakly expressed in some tissues, such as small intestine, colon and fetal brain.

It is found in the golgi apparatus. Its subcellular location is the golgi stack membrane. It catalyses the reaction a beta-D-galactoside + CMP-N-acetyl-beta-neuraminate = an N-acetyl-alpha-neuraminyl-(2-&gt;6)-beta-D-galactosyl derivative + CMP + H(+). Functionally, transfers sialic acid from the donor of substrate CMP-sialic acid to galactose containing acceptor substrates. Has alpha-2,6-sialyltransferase activity toward oligosaccharides that have the Gal-beta-1,4-GlcNAc sequence at the non-reducing end of their carbohydrate groups, but it has weak or no activities toward glycoproteins and glycolipids. The sequence is that of Beta-galactoside alpha-2,6-sialyltransferase 2 (ST6GAL2) from Homo sapiens (Human).